Here is a 69-residue protein sequence, read N- to C-terminus: Cytochrome b-c1 complex subunit 6-1, mitochondrial (69 aa).

2 disulfides stabilise this stretch: cysteine 17–cysteine 59 and cysteine 31–cysteine 45.

It belongs to the UQCRH/QCR6 family. Component of the ubiquinol-cytochrome c oxidoreductase (cytochrome b-c1 complex, complex III, CIII), a multisubunit enzyme composed of 10 subunits. The complex is composed of 3 respiratory subunits cytochrome b (MT-CYB), cytochrome c1 (CYC1-1 or CYC1-2) and Rieske protein (UCR1-1 or UCR1-2), 2 core protein subunits MPPalpha1 (or MPPalpha2) and MPPB, and 5 low-molecular weight protein subunits QCR7-1 (or QCR7-2), UCRQ-1 (or UCRQ-2), QCR9, UCRY and probably QCR6-1 (or QCR6-2). The complex exists as an obligatory dimer and forms supercomplexes (SCs) in the inner mitochondrial membrane with NADH-ubiquinone oxidoreductase (complex I, CI), resulting in different assemblies (supercomplexes SCI(1)III(2) and SCI(2)III(4)).

It is found in the mitochondrion inner membrane. In terms of biological role, component of the ubiquinol-cytochrome c oxidoreductase, a multisubunit transmembrane complex that is part of the mitochondrial electron transport chain which drives oxidative phosphorylation. The respiratory chain contains 3 multisubunit complexes succinate dehydrogenase (complex II, CII), ubiquinol-cytochrome c oxidoreductase (cytochrome b-c1 complex, complex III, CIII) and cytochrome c oxidase (complex IV, CIV), that cooperate to transfer electrons derived from NADH and succinate to molecular oxygen, creating an electrochemical gradient over the inner membrane that drives transmembrane transport and the ATP synthase. The cytochrome b-c1 complex catalyzes electron transfer from ubiquinol to cytochrome c, linking this redox reaction to translocation of protons across the mitochondrial inner membrane, with protons being carried across the membrane as hydrogens on the quinol. In the process called Q cycle, 2 protons are consumed from the matrix, 4 protons are released into the intermembrane space and 2 electrons are passed to cytochrome c. The chain is Cytochrome b-c1 complex subunit 6-1, mitochondrial (QCR6-1) from Arabidopsis thaliana (Mouse-ear cress).